The primary structure comprises 425 residues: Probable isoprenylcysteine alpha-carbonyl methylesterase ICMEL1 (425 aa).

Basic and acidic residues predominate over residues 1 to 10 (MQVELADRAA). The tract at residues 1-42 (MQVELADRAAARPSETGEAPPSSPAAAAAASAAAEDAPLLPG) is disordered. Residues 24-34 (PAAAAAASAAA) are compositionally biased toward low complexity. Helical transmembrane passes span 99–119 (FLAL…VVYY) and 154–174 (VVAF…GALL). Substrate contacts are provided by residues 160–162 (GGA) and 231–233 (QSA). Residues Ser-232, Asp-334, and His-366 contribute to the active site.

The protein belongs to the AB hydrolase superfamily. Isoprenylcysteine methylesterase family.

Its subcellular location is the endoplasmic reticulum membrane. It is found in the golgi apparatus membrane. It carries out the reaction [protein]-C-terminal S-[(2E,6E)-farnesyl]-L-cysteine methyl ester + H2O = [protein]-C-terminal S-[(2E,6E)-farnesyl]-L-cysteine + methanol + H(+). In terms of biological role, catalyzes the demethylation of isoprenylcysteine methylesters. This Oryza sativa subsp. japonica (Rice) protein is Probable isoprenylcysteine alpha-carbonyl methylesterase ICMEL1 (IMCEL1).